Here is a 459-residue protein sequence, read N- to C-terminus: Vacuolar cation/proton exchanger 3 (459 aa).

Residues Met-1–Gln-67 are Cytoplasmic-facing. Residues Glu-68–Ala-88 traverse the membrane as a helical segment. Over Asn-89 to Arg-95 the chain is Extracellular. A helical transmembrane segment spans residues Pro-96–Leu-116. At Thr-117 to Gly-129 the chain is on the cytoplasmic side. Residues Gly-130–Ala-150 form a helical membrane-spanning segment. Residues Gly-137–Val-172 form a cation selection region. Residues Asn-151–Leu-161 lie on the Extracellular side of the membrane. The helical transmembrane segment at Leu-162–Ile-182 threads the bilayer. The Cytoplasmic portion of the chain corresponds to Ala-183 to Gln-195. The chain crosses the membrane as a helical span at residues Ala-196–Leu-216. The Extracellular portion of the chain corresponds to Lys-217–Arg-238. Residues Thr-239–His-259 form a helical membrane-spanning segment. Topologically, residues Arg-260–Pro-283 are cytoplasmic. A helical membrane pass occupies residues Val-284 to Leu-304. Residues Ser-305 to Ser-327 lie on the Extracellular side of the membrane. The chain crosses the membrane as a helical span at residues Ile-328–Phe-348. Residues Gly-335 to Val-370 form a cation selection region. The Cytoplasmic segment spans residues Lys-349–Ser-362. A helical membrane pass occupies residues Ala-363 to Ile-383. The Extracellular segment spans residues Lys-384 to Asp-386. A helical transmembrane segment spans residues Leu-387–Thr-407. At Leu-408–Lys-417 the chain is on the cytoplasmic side. The helical transmembrane segment at Gly-418–Pro-438 threads the bilayer. Residues Gln-439–Ala-459 are Extracellular-facing.

Belongs to the Ca(2+):cation antiporter (CaCA) (TC 2.A.19) family. Cation/proton exchanger (CAX) subfamily. In terms of tissue distribution, expressed in roots, stems and flowers.

It localises to the vacuole membrane. With respect to regulation, inhibited by excess of Ca(2+). Vacuolar cation/proton exchanger (CAX). Translocates Ca(2+) and other metal ions into vacuoles using the proton gradient formed by H(+)-ATPase and H(+)-pyrophosphatase. Involved in ion homeostasis in association with CAX1. This chain is Vacuolar cation/proton exchanger 3 (CAX3), found in Arabidopsis thaliana (Mouse-ear cress).